The following is a 355-amino-acid chain: Holliday junction branch migration complex subunit RuvB (355 aa).

Residues 4–190 are large ATPase domain (RuvB-L); the sequence is TDKLAAERII…FGIVARLEFY (187 aa). Residues L29, R30, G71, K74, T75, T76, 137-139, R180, Y190, and R227 contribute to the ATP site; that span reads EDY. T75 lines the Mg(2+) pocket. A small ATPAse domain (RuvB-S) region spans residues 191 to 261; it reads DADQLARIVR…VADAALAMLD (71 aa). The interval 264-355 is head domain (RuvB-H); that stretch reads PVGFDLMDRK…RGMWDTPAGK (92 aa). Positions 300, 319, and 324 each coordinate DNA.

The protein belongs to the RuvB family. Homohexamer. Forms an RuvA(8)-RuvB(12)-Holliday junction (HJ) complex. HJ DNA is sandwiched between 2 RuvA tetramers; dsDNA enters through RuvA and exits via RuvB. An RuvB hexamer assembles on each DNA strand where it exits the tetramer. Each RuvB hexamer is contacted by two RuvA subunits (via domain III) on 2 adjacent RuvB subunits; this complex drives branch migration. In the full resolvosome a probable DNA-RuvA(4)-RuvB(12)-RuvC(2) complex forms which resolves the HJ.

The protein localises to the cytoplasm. The catalysed reaction is ATP + H2O = ADP + phosphate + H(+). The RuvA-RuvB-RuvC complex processes Holliday junction (HJ) DNA during genetic recombination and DNA repair, while the RuvA-RuvB complex plays an important role in the rescue of blocked DNA replication forks via replication fork reversal (RFR). RuvA specifically binds to HJ cruciform DNA, conferring on it an open structure. The RuvB hexamer acts as an ATP-dependent pump, pulling dsDNA into and through the RuvAB complex. RuvB forms 2 homohexamers on either side of HJ DNA bound by 1 or 2 RuvA tetramers; 4 subunits per hexamer contact DNA at a time. Coordinated motions by a converter formed by DNA-disengaged RuvB subunits stimulates ATP hydrolysis and nucleotide exchange. Immobilization of the converter enables RuvB to convert the ATP-contained energy into a lever motion, pulling 2 nucleotides of DNA out of the RuvA tetramer per ATP hydrolyzed, thus driving DNA branch migration. The RuvB motors rotate together with the DNA substrate, which together with the progressing nucleotide cycle form the mechanistic basis for DNA recombination by continuous HJ branch migration. Branch migration allows RuvC to scan DNA until it finds its consensus sequence, where it cleaves and resolves cruciform DNA. This is Holliday junction branch migration complex subunit RuvB from Burkholderia ambifaria (strain ATCC BAA-244 / DSM 16087 / CCUG 44356 / LMG 19182 / AMMD) (Burkholderia cepacia (strain AMMD)).